An 805-amino-acid polypeptide reads, in one-letter code: BLOC-2 complex member HPS6 (805 aa).

Positions 743-805 are disordered; that stretch reads GAQGRPSGPV…LGAADVGVHL (63 aa). The span at 764–773 shows a compositional bias: pro residues; the sequence is GTPPPTPPRG.

In terms of assembly, component of the biogenesis of lysosome-related organelles complex-2 (or BLOC2) composed of HPS3, HPS5 and HPS6. Interacts with HPS5 and HPS3. Interacts with biogenesis of lysosome-related organelles complex-1 (BLOC1). Interacts with dynein intermediate chain. Interacts with AP-3 complex. Interacts with DCTN1. As to expression, widely expressed, with lowest expression in skeletal muscle.

The protein resides in the microsome membrane. Its subcellular location is the cytoplasm. It is found in the cytosol. The protein localises to the early endosome membrane. It localises to the lysosome membrane. In terms of biological role, may regulate the synthesis and function of lysosomes and of highly specialized organelles, such as melanosomes and platelet dense granules. Acts as a cargo adapter for the dynein-dynactin motor complex to mediate the transport of lysosomes from the cell periphery to the perinuclear region. Facilitates retrograde lysosomal trafficking by linking the motor complex to lysosomes, and perinuclear positioning of lysosomes is crucial for the delivery of endocytic cargos to lysosomes, for lysosome maturation and functioning. The protein is BLOC-2 complex member HPS6 (Hps6) of Mus musculus (Mouse).